Reading from the N-terminus, the 1005-residue chain is Translocated actin-recruiting phosphoprotein (1005 aa).

The span at 1–10 (MTNSISGYQP) shows a compositional bias: polar residues. Disordered regions lie at residues 1–36 (MTNS…SVST), 73–155 (APNV…SNYD), 487–521 (INWG…SPTP), 542–626 (DTNV…DGPA), 671–749 (GSAQ…GPSG), and 792–847 (TGTS…TSLM). 2 stretches are compositionally biased toward low complexity: residues 11 to 36 (TVTT…SVST) and 73 to 121 (APNV…SSDH). A compositionally biased stretch (polar residues) spans 130–154 (GSNSGDISNNYDDVGSNNGDISSNY). Composition is skewed to low complexity over residues 542 to 578 (DTNV…TDDI), 593 to 612 (GDIS…VSSS), 720 to 736 (SSSG…SSES), and 831 to 846 (STTT…TTSL).

It belongs to the chlamydial CPn_0572/CT_456/TC_0741 family. In terms of processing, phosphorylated on a tyrosine on attachment to the host cell. Tyrosine phosphorylation is temporally and spatially associated with recruitment of actin to the site of chlamydial entry. Phosphorylated Tarp seems to remain cytoplasmically exposed on the inclusion membrane at one side of internalized elementary bodies for several hours after entry.

It localises to the secreted. In terms of biological role, appears to initiate or participate in signaling events that regulate the actin recruitment, which ultimately leads to internalization. This chain is Translocated actin-recruiting phosphoprotein (tarP), found in Chlamydia trachomatis serovar D (strain ATCC VR-885 / DSM 19411 / UW-3/Cx).